The chain runs to 109 residues: Class I hydrophobin 7 (109 aa).

The N-terminal stretch at 1–17 (MFAQSFIITALAALAVA) is a signal peptide. 4 cysteine pairs are disulfide-bonded: C28–C88, C35–C82, C36–C69, and C89–C102.

The protein belongs to the fungal hydrophobin family. As to quaternary structure, self-assembles to form functional amyloid fibrils called rodlets. Self-assembly into fibrillar rodlets occurs spontaneously at hydrophobic:hydrophilic interfaces and the rodlets further associate laterally to form amphipathic monolayers.

The protein localises to the secreted. Its subcellular location is the cell wall. In terms of biological role, aerial growth, conidiation, and dispersal of filamentous fungi in the environment rely upon a capability of their secreting small amphipathic proteins called hydrophobins (HPBs) with low sequence identity. Class I can self-assemble into an outermost layer of rodlet bundles on aerial cell surfaces, conferring cellular hydrophobicity that supports fungal growth, development and dispersal; whereas Class II form highly ordered films at water-air interfaces through intermolecular interactions but contribute nothing to the rodlet structure. Hydph7 is a class I hydrophobin involved in fruiting body development. The sequence is that of Class I hydrophobin 7 from Pleurotus ostreatus (strain PC15) (Oyster mushroom).